A 2475-amino-acid polypeptide reads, in one-letter code: Non-reducing polyketide synthase prhL (2475 aa).

Residues 14 to 253 form an N-terminal acylcarrier protein transacylase domain (SAT) region; it reads VLFGSKYSEI…HHADHLSAAQ (240 aa). Residues 384-800 enclose the Ketosynthase family 3 (KS3) domain; sequence SIPIAVTGLA…GSNAAIVLKE (417 aa). Residues C549, H684, and H723 each act as for beta-ketoacyl synthase activity in the active site. The malonyl-CoA:ACP transacylase (MAT) domain stretch occupies residues 910–1212; that stretch reads LCFGGQTGNK…CPMDLSGPQA (303 aa). Residue S997 is the For acyl/malonyl transferase activity of the active site. The interval 1279 to 1407 is N-terminal hotdog fold; sequence EGLKLVQLLK…GTISLSPGAN (129 aa). Positions 1279–1586 constitute a PKS/mFAS DH domain; that stretch reads EGLKLVQLLK…FTSVSIQSLR (308 aa). Residues 1282–1585 form a product template (PT) domain region; sequence KLVQLLKNEG…TFTSVSIQSL (304 aa). Catalysis depends on H1312, which acts as the Proton acceptor; for dehydratase activity. Positions 1435-1586 are C-terminal hotdog fold; that stretch reads SSSGLKRSTV…FTSVSIQSLR (152 aa). Residue D1493 is the Proton donor; for dehydratase activity of the active site. The region spanning 1626–1703 is the Carrier domain; the sequence is SSNGDDLRTV…ALVQRIFPGR (78 aa). S1663 carries the post-translational modification O-(pantetheine 4'-phosphoryl)serine. Residues 1865-2098 form a methyltransferase (CMeT) domain region; sequence HHTSEHKLLH…GFNWVDWTDN (234 aa). Residues 2127-2475 are thioesterase (TE) domain; it reads SDIHEETVVY…YEFLRSHVRL (349 aa). Residues S2250 and D2412 each act as for thioesterase activity in the active site.

The enzyme catalyses 3 malonyl-CoA + acetyl-CoA + 2 S-adenosyl-L-methionine = 3,5-dimethylorsellinate + 2 S-adenosyl-L-homocysteine + 3 CO2 + 4 CoA. Its pathway is secondary metabolite biosynthesis; terpenoid biosynthesis. In terms of biological role, non-reducing polyketide synthase; part of the gene cluster that mediates the biosynthesis of paraherquonin, a meroterpenoid with a unique, highly congested hexacyclic molecular architecture. The first step of the pathway is the synthesis of 3,5-dimethylorsellinic acid (DMOA) by the polyketide synthase prhL. Synthesis of DMOA is followed by farnesylation by the prenyltransferase prhE, methylesterification by the methyl-transferase prhM, epoxidation of the prenyl chain by the flavin-dependent monooxygenase prhF, and cyclization of the farnesyl moiety by the terpene cyclase prhH, to yield the tetracyclic intermediate, protoaustinoid A. The short chain dehydrogenase prhI then oxidizes the C-3 alcohol group of the terpene cyclase product to transform protoaustinoid A into protoaustinoid B. The FAD-binding monooxygenase prhJ catalyzes the oxidation of protoaustinoid B into preaustinoid A which is further oxidized into preaustinoid A1 by FAD-binding monooxygenase phrK. Finally, prhA leads to berkeleydione via the berkeleyone B intermediate. PrhA is a multifunctional dioxygenase that first desaturates at C5-C6 to form berkeleyone B, followed by rearrangement of the A/B-ring to form the cycloheptadiene moiety in berkeleydione. Berkeleydione serves as the key intermediate for the biosynthesis of paraherquonin as well as many other meroterpenoids. The cytochrome P450 monooxygenases prhB, prhD, and prhN, as well as the isomerase prhC, are probably involved in the late stage of paraherquonin biosynthesis, after the production of berkeleydione. Especially prhC might be a multifunctional enzyme that catalyzes the D-ring expansion via intramolecular methoxy rearrangement, as well as the hydrolysis of the expanded D-ring. The sequence is that of Non-reducing polyketide synthase prhL from Penicillium brasilianum.